The chain runs to 650 residues: Glycoprotein antigen BM86 (650 aa).

The signal sequence occupies residues 1-19 (MRGIALFVAAVSLIVEGTA). EGF-like domains are found at residues 20–66 (ESSI…KQCE) and 67–104 (YKDTCKTRECSYGRCVESNPSKASCVCEASDDLTLQCK). 6 cysteine pairs are disulfide-bonded: Cys24/Cys37, Cys32/Cys49, Cys51/Cys65, Cys71/Cys81, Cys76/Cys91, and Cys93/Cys103. N-linked (GlcNAc...) asparagine glycans are attached at residues Asn141 and Asn182. 3 EGF-like domains span residues 205–247 (CINA…ITCK), 251–292 (HTVS…DTCI), and 291–335 (CISD…NECL). 9 disulfide bridges follow: Cys209–Cys222, Cys218–Cys231, Cys233–Cys246, Cys255–Cys269, Cys263–Cys278, Cys280–Cys291, Cys295–Cys307, Cys300–Cys316, and Cys318–Cys334. N-linked (GlcNAc...) asparagine glycosylation is found at Asn348 and Asn382. EGF-like domains are found at residues 482–530 (RRSV…IGCI) and 531–568 (ERTTCNPKEIQECQDKKLECVYKNHKAECECPDDHECY). 6 disulfides stabilise this stretch: Cys486/Cys500, Cys492/Cys516, Cys518/Cys529, Cys535/Cys550, Cys543/Cys559, and Cys561/Cys567. The tract at residues 603–628 (KSEATTAATTTTKAKDKDPDPGKSSA) is disordered. Residue Ser627 is the site of GPI-anchor amidated serine attachment. A propeptide spans 628-650 (AAAVSATGLLLLLAATSVTAASL) (removed in mature form).

It localises to the cell membrane. The chain is Glycoprotein antigen BM86 from Rhipicephalus microplus (Cattle tick).